A 179-amino-acid polypeptide reads, in one-letter code: O-acetyl-ADP-ribose deacetylase (179 aa).

Residues 1 to 175 form the Macro domain; it reads MTSRLQVIQG…LYARLLTQQG (175 aa). Residues 11-12, N25, 33-35, and 122-126 contribute to the substrate site; these read DI, GVD, and STGVY. Residue D35 is the Proton acceptor of the active site.

Belongs to the MacroD-type family. YmdB subfamily. As to quaternary structure, homodimer. Interacts with RNase III.

The catalysed reaction is 3''-O-acetyl-ADP-D-ribose + H2O = ADP-D-ribose + acetate + H(+). It catalyses the reaction 2''-O-acetyl-ADP-D-ribose + H2O = ADP-D-ribose + acetate + H(+). Deacetylates O-acetyl-ADP ribose to yield ADP-ribose and free acetate. Down-regulates ribonuclease 3 (RNase III) activity. Acts by interacting directly with the region of the ribonuclease that is required for dimerization/activation. The chain is O-acetyl-ADP-ribose deacetylase from Salmonella gallinarum (strain 287/91 / NCTC 13346).